We begin with the raw amino-acid sequence, 261 residues long: 3'-5' ssDNA/RNA exonuclease TatD (261 aa).

Residues E92, H128, and H153 each contribute to the a divalent metal cation site.

The protein belongs to the metallo-dependent hydrolases superfamily. TatD-type hydrolase family. TatD subfamily. Monomer. It depends on Mg(2+) as a cofactor.

Its subcellular location is the cytoplasm. 3'-5' exonuclease that prefers single-stranded DNA and RNA. May play a role in the H(2)O(2)-induced DNA damage repair. This chain is 3'-5' ssDNA/RNA exonuclease TatD, found in Erwinia billingiae (strain Eb661).